The following is a 419-amino-acid chain: MDLLAELQWRGLVNQTTDEDGLRKLLNEERVTLYCGFDPTADSLHIGNLAAILTLRRFQQAGHRPIALVGGATGLIGDPSGKKSERTLNAKETVEAWSARIKEQLGRFLDFEADGNPAKIKNNYDWIGPLDVITFLRDVGKHFSVNYMMAKESVQSRIETGISFTEFSYMMLQAYDFLRLYETEGCRLQIGGSDQWGNITAGLELIRKTKGEARAFGLTIPLVTKADGTKFGKTESGTIWLDKEKTSPYEFYQFWINTDDRDVIRYLKYFTFLSKEEIEALEQELREAPEKRAAQKALAEEVTKLVHGEEALRQAIRISEALFSGDIANLTAAEIEQGFKDVPSFVHEGGDVPLVELLVSAGISPSKRQAREDIQNGAIYVNGERLQDVGAILTAEHRLEGRFTVIRRGKKKYYLIRYA.

L-tyrosine is bound at residue Tyr34. The 'HIGH' region signature appears at 39–48 (PTADSLHIGN). L-tyrosine-binding residues include Tyr169 and Gln173. The short motif at 230–234 (KFGKT) is the 'KMSKS' region element. Lys233 provides a ligand contact to ATP. In terms of domain architecture, S4 RNA-binding spans 352 to 419 (VPLVELLVSA…KKKYYLIRYA (68 aa)).

The protein belongs to the class-I aminoacyl-tRNA synthetase family. TyrS type 1 subfamily. Homodimer.

It localises to the cytoplasm. It catalyses the reaction tRNA(Tyr) + L-tyrosine + ATP = L-tyrosyl-tRNA(Tyr) + AMP + diphosphate + H(+). Catalyzes the attachment of tyrosine to tRNA(Tyr) in a two-step reaction: tyrosine is first activated by ATP to form Tyr-AMP and then transferred to the acceptor end of tRNA(Tyr). The protein is Tyrosine--tRNA ligase of Bacillus caldotenax.